The sequence spans 402 residues: UPF0597 protein THA_1286 (402 aa).

Belongs to the UPF0597 family.

The sequence is that of UPF0597 protein THA_1286 from Thermosipho africanus (strain TCF52B).